A 296-amino-acid polypeptide reads, in one-letter code: Nucleotide-binding protein RSc0403 (296 aa).

ATP is bound at residue G8–S15. D57 to S60 contacts GTP. Residues T99–P124 are disordered.

The protein belongs to the RapZ-like family.

Displays ATPase and GTPase activities. The chain is Nucleotide-binding protein RSc0403 from Ralstonia nicotianae (strain ATCC BAA-1114 / GMI1000) (Ralstonia solanacearum).